A 182-amino-acid polypeptide reads, in one-letter code: MQTEHVILLNAQGVPTGTLEKYAAHTADTLLHLAFSSWLFNAKGQLLVTRRALSKKAWPGVWTNSVCGHPQLGERNEDAVIRRCRYELGVEITPPESIYPDFRYRATDPNGIVENEVCPVFAARTNSALQINDDEVMDYQWCDLADVLHGIDATPWAFSPWMVMQAANSEARKLLSAFAQHN.

Mn(2+)-binding residues include His25 and His32. The region spanning 30 to 164 (LLHLAFSSWL…PWAFSPWMVM (135 aa)) is the Nudix hydrolase domain. Cys67 is an active-site residue. His69 serves as a coordination point for Mn(2+). Glu87 is a Mg(2+) binding site. Mn(2+) contacts are provided by Glu114 and Glu116. Residue Glu116 is part of the active site.

It belongs to the IPP isomerase type 1 family. As to quaternary structure, homodimer. The cofactor is Mg(2+). Mn(2+) is required as a cofactor.

It localises to the cytoplasm. The enzyme catalyses isopentenyl diphosphate = dimethylallyl diphosphate. It functions in the pathway isoprenoid biosynthesis; dimethylallyl diphosphate biosynthesis; dimethylallyl diphosphate from isopentenyl diphosphate: step 1/1. Functionally, catalyzes the 1,3-allylic rearrangement of the homoallylic substrate isopentenyl (IPP) to its highly electrophilic allylic isomer, dimethylallyl diphosphate (DMAPP). This chain is Isopentenyl-diphosphate Delta-isomerase, found in Shigella boydii serotype 18 (strain CDC 3083-94 / BS512).